Consider the following 721-residue polypeptide: MPLDIEELLRKKKAADTAAAKPRFIPKAERERLAAEKAKKEEDDKKRKASEEEQKRKEEEQKWRSNGSSRPNESNGSGRVPTGPRSMNDGRDDRERDRDRDQGRGRVRGKDRKGDKQGVGADKQSAEDIEATLLRSRYLGPQVNQQSNFSAKKKRMRTTEKKFNFEWDADEDTSRDNDPLYDRQTAVSHNGSFAGIGGEFDDGAEERARKRAKMIAQRDPENGKERAEGIMEDFFRARDKARQRADRRGLGKHWSEKSLDDMRERDWRIFKEDFGIATKGGMIPNPMRSWQESNLPQRLLNIVDDVGYKDPSPIQRAAIPIALQARDLIGVAVTGSGKTAAFLLPLLVYISDLPPLDEINKHDGPYALIMAPTRELVQQIETEARKFAGPLGFRVVSIVGGHQIEEQAYNLRDGAEIVVATPGRLLDCIERRLLVLSQCCYVIMDEADRMIDLGFEESVNKILDALPVTNEKPDTDEAENAQIMQRYLGGRDRYRQTMMYTATMPPLVERIAKKYLRRPAIVTIGNAGEAVDTVEQRVEFVSGEDRRKKRLQEILSSGNFGPPIIVFVNIKRNCDAVARDIKQMGWSAVTLHGSKTQEQREAALGSVRAGHTQVLVATDLAGRGIDVPDVSLVVNFNMATNIESYTHRIGRTGRAGKSGVAITFLGPEDHETMYDLKQILSKSSISKVPEELRRHEAAQSKPVRGAKKDKDEGSGKGNWQH.

The disordered stretch occupies residues 12–134 (KKAADTAAAK…SAEDIEATLL (123 aa)). The segment covering 26–63 (PKAERERLAAEKAKKEEDDKKRKASEEEQKRKEEEQKW) has biased composition (basic and acidic residues). The span at 64–77 (RSNGSSRPNESNGS) shows a compositional bias: polar residues. Positions 88-104 (NDGRDDRERDRDRDQGR) are enriched in basic and acidic residues. The Q motif motif lies at 288 to 316 (RSWQESNLPQRLLNIVDDVGYKDPSPIQR). The region spanning 319-522 (IPIALQARDL…KKYLRRPAIV (204 aa)) is the Helicase ATP-binding domain. An ATP-binding site is contributed by 332–339 (AVTGSGKT). The DEAD box motif lies at 445–448 (DEAD). The Helicase C-terminal domain maps to 533–696 (TVEQRVEFVS…KVPEELRRHE (164 aa)). The segment at 685–721 (ISKVPEELRRHEAAQSKPVRGAKKDKDEGSGKGNWQH) is disordered. Over residues 688–698 (VPEELRRHEAA) the composition is skewed to basic and acidic residues.

It belongs to the DEAD box helicase family. DDX23/PRP28 subfamily. As to quaternary structure, component of the U5 snRNP complex.

Its subcellular location is the cytoplasm. It is found in the nucleus. It catalyses the reaction ATP + H2O = ADP + phosphate + H(+). ATP-dependent RNA helicase involved in mRNA splicing. May destabilize the U1/5'-splice site duplex to permit an effective competition for the 5'-splice site by the U6 snRNA, resulting in the switch between U1 and U6 at the 5'-splice site. May also act to unwind the U4/U6 base-pairing interaction in the U4/U6/U5 snRNP, facilitating the first covalent step of splicing. The protein is Pre-mRNA-splicing ATP-dependent RNA helicase PRP28 (PRP28) of Gibberella zeae (strain ATCC MYA-4620 / CBS 123657 / FGSC 9075 / NRRL 31084 / PH-1) (Wheat head blight fungus).